Here is a 444-residue protein sequence, read N- to C-terminus: Phosphoglucosamine mutase (444 aa).

The active-site Phosphoserine intermediate is Ser102. The Mg(2+) site is built by Ser102, Asp241, Asp243, and Asp245. Ser102 is subject to Phosphoserine.

Belongs to the phosphohexose mutase family. Mg(2+) is required as a cofactor. In terms of processing, activated by phosphorylation.

It carries out the reaction alpha-D-glucosamine 1-phosphate = D-glucosamine 6-phosphate. Its function is as follows. Catalyzes the conversion of glucosamine-6-phosphate to glucosamine-1-phosphate. This is Phosphoglucosamine mutase from Haemophilus ducreyi (strain 35000HP / ATCC 700724).